Reading from the N-terminus, the 226-residue chain is NAD(P)H-hydrate epimerase (226 aa).

The YjeF N-terminal domain maps to 10–215; sequence AIELDLDLFE…ALQRKYQLNL (206 aa). Position 58 to 62 (58 to 62) interacts with (6S)-NADPHX; that stretch reads NNGGD. K(+)-binding residues include Asn59 and Asp123. Residues 127 to 133 and Asp156 contribute to the (6S)-NADPHX site; that span reads GFGFKPP. Ser159 provides a ligand contact to K(+).

It belongs to the NnrE/AIBP family. K(+) is required as a cofactor.

It catalyses the reaction (6R)-NADHX = (6S)-NADHX. The enzyme catalyses (6R)-NADPHX = (6S)-NADPHX. Its function is as follows. Catalyzes the epimerization of the S- and R-forms of NAD(P)HX, a damaged form of NAD(P)H that is a result of enzymatic or heat-dependent hydration. This is a prerequisite for the S-specific NAD(P)H-hydrate dehydratase to allow the repair of both epimers of NAD(P)HX. This Drosophila persimilis (Fruit fly) protein is NAD(P)H-hydrate epimerase.